Here is a 492-residue protein sequence, read N- to C-terminus: MTQYETVIGLEVHVQLNTKSKMFCRCSTDYTSAEPNTHVCPVCLGMPGVLPTINKQAVEYTIMSGLALGCDIASFSKFDRKNYNYPDLMKGYQISQYDQPLCGKGFMDINIDGAIRRIGITRIHLEEDVAKLHHESDINGQPYSLLDINRSSIPLMEIVSEPDMRTPEEARQYLMKLRTIMRYLGVSTANMEDGSFRCDANISIRPEGSPELGAKVEVKNMNSFKAVFSALEYEEVRQRKMADEGKKISQETRGWQDDKCQTVSQRSKEFAHDYRYFPEPDLPPLHISCDWIEAIRAKLPELPEVRKERFIQGYWLSEYDASLLTASRELADYFEAVLSEADFQNIPQDKGIKEVANWVVGPVSSIMNTAGADINAFTLKVSPASLCRLLVLVSAGKVNAATAKAVLEDMYSTGQNAETIIEKKGLSQISDSSELVSIAKKVLADNPKAVAEYNEGKTQVIGFLVGQMMKQSKGRANPNIAMELLKKALEEG.

Belongs to the GatB/GatE family. GatB subfamily. Heterotrimer of A, B and C subunits.

It catalyses the reaction L-glutamyl-tRNA(Gln) + L-glutamine + ATP + H2O = L-glutaminyl-tRNA(Gln) + L-glutamate + ADP + phosphate + H(+). The catalysed reaction is L-aspartyl-tRNA(Asn) + L-glutamine + ATP + H2O = L-asparaginyl-tRNA(Asn) + L-glutamate + ADP + phosphate + 2 H(+). Its function is as follows. Allows the formation of correctly charged Asn-tRNA(Asn) or Gln-tRNA(Gln) through the transamidation of misacylated Asp-tRNA(Asn) or Glu-tRNA(Gln) in organisms which lack either or both of asparaginyl-tRNA or glutaminyl-tRNA synthetases. The reaction takes place in the presence of glutamine and ATP through an activated phospho-Asp-tRNA(Asn) or phospho-Glu-tRNA(Gln). This chain is Aspartyl/glutamyl-tRNA(Asn/Gln) amidotransferase subunit B, found in Dehalococcoides mccartyi (strain ATCC BAA-2266 / KCTC 15142 / 195) (Dehalococcoides ethenogenes (strain 195)).